We begin with the raw amino-acid sequence, 160 residues long: MKIRIGHGFDVHKFGADRPLILCGIEVPYETGLIAHSDGDVVLHAISDAILGAMALGDIGKHFPDTDAAYEGADSRVLLRHCFKLAREHGFAIGNLDVTIIAQAPKMLPHIEAMRAVLADDLQTELNNINVKATTTEKLGFTGRKEGIAVEAVVLMENVK.

Residues aspartate 10 and histidine 12 each coordinate a divalent metal cation. Residues 10-12 (DVH) and 36-37 (HS) contribute to the 4-CDP-2-C-methyl-D-erythritol 2-phosphate site. A divalent metal cation is bound at residue histidine 44. Residues 58–60 (DIG), 63–67 (FPDTD), 102–108 (AQAPKML), 134–137 (TTTE), phenylalanine 141, and arginine 144 each bind 4-CDP-2-C-methyl-D-erythritol 2-phosphate.

The protein belongs to the IspF family. Homotrimer. A divalent metal cation is required as a cofactor.

It catalyses the reaction 4-CDP-2-C-methyl-D-erythritol 2-phosphate = 2-C-methyl-D-erythritol 2,4-cyclic diphosphate + CMP. The protein operates within isoprenoid biosynthesis; isopentenyl diphosphate biosynthesis via DXP pathway; isopentenyl diphosphate from 1-deoxy-D-xylulose 5-phosphate: step 4/6. Involved in the biosynthesis of isopentenyl diphosphate (IPP) and dimethylallyl diphosphate (DMAPP), two major building blocks of isoprenoid compounds. Catalyzes the conversion of 4-diphosphocytidyl-2-C-methyl-D-erythritol 2-phosphate (CDP-ME2P) to 2-C-methyl-D-erythritol 2,4-cyclodiphosphate (ME-CPP) with a corresponding release of cytidine 5-monophosphate (CMP). This chain is 2-C-methyl-D-erythritol 2,4-cyclodiphosphate synthase, found in Shewanella amazonensis (strain ATCC BAA-1098 / SB2B).